Reading from the N-terminus, the 373-residue chain is Chaperone protein DnaJ (373 aa).

The region spanning 5–70 is the J domain; sequence DYYELLEVDR…EKRALYDQYG (66 aa). The segment at 134-211 adopts a CR-type zinc-finger fold; sequence GTQKEVHYSF…CSGKGYRIEK (78 aa). Residues C147, C150, C163, C166, C185, C188, C199, and C202 each contribute to the Zn(2+) site. 4 CXXCXGXG motif repeats span residues 147–154, 163–170, 185–192, and 199–206; these read CSACKGTG, CPECHGRG, CPRCHGQG, and CEECSGKG.

This sequence belongs to the DnaJ family. In terms of assembly, homodimer. It depends on Zn(2+) as a cofactor.

It is found in the cytoplasm. Participates actively in the response to hyperosmotic and heat shock by preventing the aggregation of stress-denatured proteins and by disaggregating proteins, also in an autonomous, DnaK-independent fashion. Unfolded proteins bind initially to DnaJ; upon interaction with the DnaJ-bound protein, DnaK hydrolyzes its bound ATP, resulting in the formation of a stable complex. GrpE releases ADP from DnaK; ATP binding to DnaK triggers the release of the substrate protein, thus completing the reaction cycle. Several rounds of ATP-dependent interactions between DnaJ, DnaK and GrpE are required for fully efficient folding. Also involved, together with DnaK and GrpE, in the DNA replication of plasmids through activation of initiation proteins. The chain is Chaperone protein DnaJ from Nitratiruptor sp. (strain SB155-2).